Reading from the N-terminus, the 398-residue chain is Meiotically up-regulated gene 126 protein (398 aa).

2 disordered regions span residues 30-81 (EEME…QRHR) and 119-260 (FESD…NSNS). 2 stretches are compositionally biased toward polar residues: residues 119–135 (FESDQQESHTGQANFPT) and 183–199 (VQENPQAYSKVTQQEPQ). Residues 210–222 (QANQQETSSNQEE) show a composition bias toward low complexity. Residues 224-236 (SFDRQETQDDKQK) show a composition bias toward basic and acidic residues. Residues 248 to 260 (RNRNQATITNSNS) show a composition bias toward polar residues. The next 4 helical transmembrane spans lie at 269 to 289 (IFVISLLGYGVYLLAFLDLIE), 305 to 325 (IFLWCLFGVLMIARGLIYLAL), 341 to 361 (GACFWVYACIFFLTRVFCFLI), and 373 to 393 (LEIYSIFAAINVYIIELGAIY).

Its subcellular location is the membrane. Its function is as follows. Has a role in meiosis. The chain is Meiotically up-regulated gene 126 protein (mug126) from Schizosaccharomyces pombe (strain 972 / ATCC 24843) (Fission yeast).